Reading from the N-terminus, the 89-residue chain is Large ribosomal subunit protein bL27 (89 aa).

The interval 1-21 is disordered; that stretch reads MAHKKAGGSSRNGRDSKGKRL.

It belongs to the bacterial ribosomal protein bL27 family.

The chain is Large ribosomal subunit protein bL27 from Bradyrhizobium sp. (strain ORS 278).